Reading from the N-terminus, the 378-residue chain is Chorismate synthase (378 aa).

The disordered stretch occupies residues E37 to E60. R47 contacts NADP(+). FMN-binding positions include R124–S126, G289, K304–T308, and R330.

This sequence belongs to the chorismate synthase family. As to quaternary structure, homotetramer. Requires FMNH2 as cofactor.

It catalyses the reaction 5-O-(1-carboxyvinyl)-3-phosphoshikimate = chorismate + phosphate. It participates in metabolic intermediate biosynthesis; chorismate biosynthesis; chorismate from D-erythrose 4-phosphate and phosphoenolpyruvate: step 7/7. Catalyzes the anti-1,4-elimination of the C-3 phosphate and the C-6 proR hydrogen from 5-enolpyruvylshikimate-3-phosphate (EPSP) to yield chorismate, which is the branch point compound that serves as the starting substrate for the three terminal pathways of aromatic amino acid biosynthesis. This reaction introduces a second double bond into the aromatic ring system. This is Chorismate synthase from Leptospira biflexa serovar Patoc (strain Patoc 1 / Ames).